Here is a 458-residue protein sequence, read N- to C-terminus: tRNA modification GTPase MnmE (458 aa).

The (6S)-5-formyl-5,6,7,8-tetrahydrofolate site is built by R26, E88, and R127. Positions 224–378 (GLSTAIIGRP…IEDRINQLFF (155 aa)) constitute a TrmE-type G domain. N234 serves as a coordination point for K(+). GTP contacts are provided by residues 234–239 (NVGKSS), 253–259 (TDIAGTT), and 278–281 (DTAG). S238 contributes to the Mg(2+) binding site. K(+) is bound by residues T253, I255, and T258. T259 is a binding site for Mg(2+). K458 is a binding site for (6S)-5-formyl-5,6,7,8-tetrahydrofolate.

It belongs to the TRAFAC class TrmE-Era-EngA-EngB-Septin-like GTPase superfamily. TrmE GTPase family. As to quaternary structure, homodimer. Heterotetramer of two MnmE and two MnmG subunits. Requires K(+) as cofactor.

It localises to the cytoplasm. In terms of biological role, exhibits a very high intrinsic GTPase hydrolysis rate. Involved in the addition of a carboxymethylaminomethyl (cmnm) group at the wobble position (U34) of certain tRNAs, forming tRNA-cmnm(5)s(2)U34. The chain is tRNA modification GTPase MnmE from Streptococcus pyogenes serotype M18 (strain MGAS8232).